A 373-amino-acid polypeptide reads, in one-letter code: Integrator complex subunit 15 (373 aa).

It belongs to the Integrator subunit 15 family. In terms of assembly, belongs to the multiprotein complex Integrator, at least composed of IntS1, IntS2, IntS3, IntS4, omd/IntS5, IntS6, defl/IntS7, IntS8, IntS9, IntS10, IntS11, IntS12, asun/IntS13, IntS14 and IntS15. The core complex associates with protein phosphatase 2A subunits mts/PP2A and Pp2A-29B, to form the Integrator-PP2A (INTAC) complex.

Its subcellular location is the nucleus. Functionally, component of the integrator complex, a multiprotein complex that terminates RNA polymerase II (Pol II) transcription in the promoter-proximal region of genes. The integrator complex provides a quality checkpoint during transcription elongation by driving premature transcription termination of transcripts that are unfavorably configured for transcriptional elongation: the complex terminates transcription by (1) catalyzing dephosphorylation of the C-terminal domain (CTD) of Pol II subunit Rbp1 and Spt5, and (2) degrading the exiting nascent RNA transcript via endonuclease activity. The integrator complex is also involved in the 3'-end processing of the U7 snRNA, and also the spliceosomal snRNAs U1, U2, U4 and U5. In Drosophila melanogaster (Fruit fly), this protein is Integrator complex subunit 15.